The chain runs to 230 residues: Urease accessory protein UreF (230 aa).

The protein belongs to the UreF family. As to quaternary structure, ureD, UreF and UreG form a complex that acts as a GTP-hydrolysis-dependent molecular chaperone, activating the urease apoprotein by helping to assemble the nickel containing metallocenter of UreC. The UreE protein probably delivers the nickel.

Its subcellular location is the cytoplasm. Required for maturation of urease via the functional incorporation of the urease nickel metallocenter. The sequence is that of Urease accessory protein UreF from Allorhizobium ampelinum (strain ATCC BAA-846 / DSM 112012 / S4) (Agrobacterium vitis (strain S4)).